The sequence spans 547 residues: Sesquiterpene synthase TPS3 (547 aa).

Arg265, Asp302, Asp306, Arg443, and Asp446 together coordinate (2E,6E)-farnesyl diphosphate. Mg(2+) is bound by residues Asp302 and Asp306. The short motif at 302–306 (DDIYD) is the DDXXD motif element. Mg(2+) is bound by residues Asp446, Thr450, and Glu454.

The protein belongs to the terpene synthase family. Tpsb subfamily. Monomer. Requires Mg(2+) as cofactor.

It localises to the cytoplasm. The enzyme catalyses (2E,6E)-farnesyl diphosphate = (1S,5S,6R)-alpha-bergamotene + diphosphate. It functions in the pathway secondary metabolite biosynthesis; terpenoid biosynthesis. In terms of biological role, sesquiterpene synthase involved in the biosynthesis of volatile organic compounds. Mediates the conversion of (2E,6E)-farnesyl diphosphate (FPP) into alpha-bergamotene. Does not use (2E)-geranyl diphosphate (GPP) as substrate. The polypeptide is Sesquiterpene synthase TPS3 (Cananga odorata (Ylang-ylang tree)).